The following is a 265-amino-acid chain: NADH dehydrogenase [ubiquinone] iron-sulfur protein 3, mitochondrial (265 aa).

The N-terminal 33 residues, 1–33 (MAALIRNLGARAAVAALSAKHVVPAAGSTALRM), are a transit peptide targeting the mitochondrion.

This sequence belongs to the complex I 30 kDa subunit family. As to quaternary structure, part of the mitochondrial membrane respiratory chain NADH dehydrogenase (Complex I). Interacts with sicily; interaction is stronger with unprocessed sicily protein.

Its subcellular location is the mitochondrion. It carries out the reaction a ubiquinone + NADH + 5 H(+)(in) = a ubiquinol + NAD(+) + 4 H(+)(out). Core subunit of the mitochondrial membrane respiratory chain NADH dehydrogenase (Complex I) that is believed to belong to the minimal assembly required for catalysis. Complex I functions in the transfer of electrons from NADH to the respiratory chain. The immediate electron acceptor for the enzyme is believed to be ubiquinone. The chain is NADH dehydrogenase [ubiquinone] iron-sulfur protein 3, mitochondrial from Drosophila melanogaster (Fruit fly).